The sequence spans 153 residues: Ribonuclease H (153 aa).

One can recognise an RNase H type-1 domain in the interval Met1 to Asp142. 4 residues coordinate Mg(2+): Asp10, Glu48, Asp70, and Asp134.

It belongs to the RNase H family. As to quaternary structure, monomer. Mg(2+) is required as a cofactor.

The protein localises to the cytoplasm. It carries out the reaction Endonucleolytic cleavage to 5'-phosphomonoester.. In terms of biological role, endonuclease that specifically degrades the RNA of RNA-DNA hybrids. This is Ribonuclease H from Aromatoleum aromaticum (strain DSM 19018 / LMG 30748 / EbN1) (Azoarcus sp. (strain EbN1)).